We begin with the raw amino-acid sequence, 122 residues long: Ribonuclease P protein component (122 aa).

It belongs to the RnpA family. In terms of assembly, consists of a catalytic RNA component (M1 or rnpB) and a protein subunit.

It carries out the reaction Endonucleolytic cleavage of RNA, removing 5'-extranucleotides from tRNA precursor.. Functionally, RNaseP catalyzes the removal of the 5'-leader sequence from pre-tRNA to produce the mature 5'-terminus. It can also cleave other RNA substrates such as 4.5S RNA. The protein component plays an auxiliary but essential role in vivo by binding to the 5'-leader sequence and broadening the substrate specificity of the ribozyme. This chain is Ribonuclease P protein component, found in Shouchella clausii (strain KSM-K16) (Alkalihalobacillus clausii).